A 364-amino-acid polypeptide reads, in one-letter code: Fructose-bisphosphate aldolase B (364 aa).

An N-acetylalanine modification is found at A2. Residue K13 is modified to N6-succinyllysine. Position 36 is a phosphoserine (S36). Residue T39 is modified to Phosphothreonine. R43 contributes to the beta-D-fructose 1,6-bisphosphate binding site. At S89 the chain carries Phosphoserine. Residue T119 is modified to Phosphothreonine. K121 carries the post-translational modification N6-succinyllysine. At S132 the chain carries Phosphoserine. E188 acts as the Proton acceptor in catalysis. K230 serves as the catalytic Schiff-base intermediate with dihydroxyacetone-P. Phosphoserine occurs at positions 272, 276, 299, and 301. 272 to 274 (SGG) provides a ligand contact to beta-D-fructose 1,6-bisphosphate. R304 is a beta-D-fructose 1,6-bisphosphate binding site. S309 carries the post-translational modification Phosphoserine. K317 carries the N6-succinyllysine modification.

Belongs to the class I fructose-bisphosphate aldolase family. Homotetramer. Interacts with BBS1, BBS2, BBS4 and BBS7. Forms a ternary complex with G6PD and TP53; this interaction is direct.

The protein localises to the cytoplasm. It is found in the cytosol. Its subcellular location is the cytoskeleton. The protein resides in the microtubule organizing center. It localises to the centrosome. The protein localises to the centriolar satellite. The catalysed reaction is beta-D-fructose 1,6-bisphosphate = D-glyceraldehyde 3-phosphate + dihydroxyacetone phosphate. The enzyme catalyses beta-D-fructose 1-phosphate = D-glyceraldehyde + dihydroxyacetone phosphate. Its pathway is carbohydrate degradation; glycolysis; D-glyceraldehyde 3-phosphate and glycerone phosphate from D-glucose: step 4/4. It functions in the pathway carbohydrate biosynthesis; gluconeogenesis. The protein operates within carbohydrate metabolism; fructose metabolism. Its function is as follows. Catalyzes the aldol cleavage of fructose 1,6-biphosphate to form two triosephosphates dihydroxyacetone phosphate and D-glyceraldehyde 3-phosphate in glycolysis as well as the reverse stereospecific aldol addition reaction in gluconeogenesis. In fructolysis, metabolizes fructose 1-phosphate derived from the phosphorylation of dietary fructose by fructokinase into dihydroxyacetone phosphate and D-glyceraldehyde. Acts as an adapter independently of its enzymatic activity, exerts a tumor suppressor role by stabilizing the ternary complex with G6PD and TP53 to inhibit G6PD activity and keep oxidative pentose phosphate metabolism in check. This chain is Fructose-bisphosphate aldolase B (ALDOB), found in Oryctolagus cuniculus (Rabbit).